The primary structure comprises 377 residues: RIB43A-like with coiled-coils protein 2 (377 aa).

Coiled coils occupy residues 217-250 and 282-308; these read NKNQ…LRGD and EEIR…RDMD.

This sequence belongs to the RIB43A family. As to quaternary structure, microtubule inner protein component of sperm flagellar doublet microtubules. Expressed in trachea multiciliated cells.

The protein resides in the cytoplasm. Its subcellular location is the cytoskeleton. It localises to the cilium axoneme. It is found in the flagellum axoneme. Microtubule inner protein (MIP) part of the dynein-decorated doublet microtubules (DMTs) in cilia axoneme, which is required for motile cilia beating. In Bos taurus (Bovine), this protein is RIB43A-like with coiled-coils protein 2.